The chain runs to 391 residues: MNDVIRDFFKMESAGGILLVIAAAIAMTIANSPLGESYQAMLHTYVFGMSVSHWINDGLMAVFFLLIGLEVKRELLEGALKSKETAIFPAIAAVGGMLAPALIYVAFNAGDPEAISGWAIPAATDIAFALGIMALLGKRVPISLKVFLLALAIIDDLGVVVIIALFYTGDLSTMALLVGFAMTGVLFMLNAKEVTKLTPYMIVGAILWFAVLKSGVHATLAGVVIGFAIPLKGKKGEHSPLKHMEHALHPYVAFGILPLFAFANAGISLEGVSMSGLTSMLPLGIALGLLVGKPLGIFTFSWAAVKLGIAKLPQGVNFIHIFAVSVLCGIGFTMSIFISSLAFANVSPEFDTYARLGILMGSTTAAIIGYVLLHFSLPKKAVEEVASEKNA.

11 consecutive transmembrane segments (helical) span residues 14-34 (AGGI…NSPL), 47-67 (FGMS…FLLI), 87-107 (IFPA…YVAF), 117-137 (GWAI…ALLG), 146-166 (VFLL…IALF), 171-191 (LSTM…MLNA), 205-225 (AILW…GVVI), 252-272 (VAFG…LEGV), 280-300 (MLPL…IFTF), 318-338 (FIHI…SIFI), and 356-376 (LGIL…LHFS).

The protein belongs to the NhaA Na(+)/H(+) (TC 2.A.33) antiporter family.

It is found in the cell inner membrane. The catalysed reaction is Na(+)(in) + 2 H(+)(out) = Na(+)(out) + 2 H(+)(in). In terms of biological role, na(+)/H(+) antiporter that extrudes sodium in exchange for external protons. The chain is Na(+)/H(+) antiporter NhaA from Vibrio campbellii (strain ATCC BAA-1116).